The chain runs to 186 residues: Ribonuclease M5 (186 aa).

The Toprim domain occupies 4-94 (KEIIVVEGRD…AKPKNKRGIG (91 aa)). Mg(2+) contacts are provided by Glu10, Asp56, and Asp58.

It belongs to the ribonuclease M5 family. Requires ribosomal protein L18 (rplR) for catalysis; it can be replaced by 30% dimethylsulfoxide suggesting L18 functions as an rRNA folding chaperone. Mg(2+) serves as cofactor. Requires Mn(2+) as cofactor. The cofactor is Ca(2+).

The protein resides in the cytoplasm. It catalyses the reaction Endonucleolytic cleavage of RNA, removing 21 and 42 nucleotides, respectively, from the 5'- and 3'-termini of a 5S-rRNA precursor.. Its function is as follows. Required for correct processing of both the 5' and 3' ends of 5S rRNA precursor. Cleaves both sides of a double-stranded region yielding mature 5S rRNA in one step. Releases 5'-phosphoryl and 3'-hydroxy termini. This Bacillus subtilis (strain 168) protein is Ribonuclease M5.